Consider the following 238-residue polypeptide: Ribitol-5-phosphate cytidylyltransferase (238 aa).

CTP is bound by residues 7 to 10 and 81 to 87; these read LAGG and GDDRNHS.

It belongs to the IspD/TarI cytidylyltransferase family. TarI subfamily.

It catalyses the reaction D-ribitol 5-phosphate + CTP + H(+) = CDP-L-ribitol + diphosphate. Its pathway is cell wall biogenesis; poly(ribitol phosphate) teichoic acid biosynthesis. In terms of biological role, catalyzes the transfer of the cytidylyl group of CTP to D-ribitol 5-phosphate. The sequence is that of Ribitol-5-phosphate cytidylyltransferase from Staphylococcus epidermidis (strain ATCC 12228 / FDA PCI 1200).